The sequence spans 232 residues: Lipoprotein-releasing system ATP-binding protein LolD (232 aa).

The 222-residue stretch at 11 to 232 folds into the ABC transporter domain; that stretch reads IEVTDLQRAF…LHDGRLIEEY (222 aa). 47–54 serves as a coordination point for ATP; that stretch reads GPSGAGKS.

This sequence belongs to the ABC transporter superfamily. Lipoprotein translocase (TC 3.A.1.125) family. As to quaternary structure, the complex is composed of two ATP-binding proteins (LolD) and two transmembrane proteins (LolC and LolE).

The protein resides in the cell inner membrane. Its function is as follows. Part of the ABC transporter complex LolCDE involved in the translocation of mature outer membrane-directed lipoproteins, from the inner membrane to the periplasmic chaperone, LolA. Responsible for the formation of the LolA-lipoprotein complex in an ATP-dependent manner. The sequence is that of Lipoprotein-releasing system ATP-binding protein LolD from Zymomonas mobilis subsp. mobilis (strain ATCC 10988 / DSM 424 / LMG 404 / NCIMB 8938 / NRRL B-806 / ZM1).